The chain runs to 260 residues: 2-amino-5-formylamino-6-ribosylaminopyrimidin-4(3H)-one 5'-monophosphate deformylase (260 aa).

Glutamate 33, histidine 35, aspartate 44, and histidine 112 together coordinate Fe cation.

It belongs to the creatininase superfamily. FAPy deformylase family. Homodimer. Fe(2+) serves as cofactor. The cofactor is Zn(2+).

The enzyme catalyses 2-amino-5-formylamino-6-(5-phospho-D-ribosylamino)pyrimidin-4(3H)-one + H2O = 2,5-diamino-6-(1-D-ribosylamino)pyrimidin-4(3H)-one 5'-phosphate + formate + H(+). The protein operates within cofactor biosynthesis; coenzyme F420 biosynthesis. Its pathway is cofactor biosynthesis; riboflavin biosynthesis. In terms of biological role, catalyzes the hydrolysis of the formamide of 2-amino-5-formylamino-6-ribosylamino-4(3H)-pyrimidinone 5'-monophosphate (FAPy) to form 2,5-diamino-6-ribosylamino-4(3H)-pyrimidinone 5'-phosphate (APy). In Methanococcus voltae (strain ATCC BAA-1334 / A3), this protein is 2-amino-5-formylamino-6-ribosylaminopyrimidin-4(3H)-one 5'-monophosphate deformylase.